A 214-amino-acid chain; its full sequence is ATP-dependent dethiobiotin synthetase BioD (214 aa).

10–15 (GIGKTY) lines the ATP pocket. Thr14 is a binding site for Mg(2+). Residue Lys35 is part of the active site. Residue Thr39 coordinates substrate. ATP contacts are provided by residues Asp44, 109-112 (EGAG), and 169-170 (NC). Mg(2+)-binding residues include Asp44 and Glu109.

The protein belongs to the dethiobiotin synthetase family. Homodimer. The cofactor is Mg(2+).

It is found in the cytoplasm. It carries out the reaction (7R,8S)-7,8-diammoniononanoate + CO2 + ATP = (4R,5S)-dethiobiotin + ADP + phosphate + 3 H(+). It participates in cofactor biosynthesis; biotin biosynthesis; biotin from 7,8-diaminononanoate: step 1/2. Its function is as follows. Catalyzes a mechanistically unusual reaction, the ATP-dependent insertion of CO2 between the N7 and N8 nitrogen atoms of 7,8-diaminopelargonic acid (DAPA, also called 7,8-diammoniononanoate) to form a ureido ring. This Methanocaldococcus jannaschii (strain ATCC 43067 / DSM 2661 / JAL-1 / JCM 10045 / NBRC 100440) (Methanococcus jannaschii) protein is ATP-dependent dethiobiotin synthetase BioD.